Consider the following 159-residue polypeptide: MKRLEKMEVSEKRIKVSEKRSPKIFLSGSIRGGRQLLGTYRFMFDTLEEAGAEVLSWHVADPELEKTEMRMTEEEIYARDMGLLLKSDALIAEVTVPSTGVGYEICRALVQRIPVLCLYSPDASVSAMVLGNPDHLLDARAYPDKASLKKIITEFILAL.

Substrate-binding positions include F25–R31, Y40, H58, E104, and S126–M128.

This sequence belongs to the 2'-deoxynucleoside 5'-phosphate N-hydrolase 1 family. Monomer and homodimer.

The enzyme catalyses a pyrimidine 2'-deoxyribonucleoside 5'-phosphate + H2O = a pyrimidine nucleobase + 2-deoxy-D-ribose 5-phosphate. It carries out the reaction a purine 2'-deoxyribonucleoside 5'-phosphate + H2O = a purine nucleobase + 2-deoxy-D-ribose 5-phosphate. In terms of biological role, catalyzes the cleavage of the N-glycosidic bond of deoxyribonucleoside 5'-monophosphates to yield deoxyribose 5-phosphate and a purine or pyrimidine base. The polypeptide is Putative 2'-deoxynucleoside 5'-phosphate N-hydrolase 1 (Methanosarcina barkeri (strain Fusaro / DSM 804)).